A 667-amino-acid chain; its full sequence is UvrABC system protein B (667 aa).

Positions 24–195 (EGLRRGDRFQ…SSGGVFHLRG (172 aa)) constitute a Helicase ATP-binding domain. Residue 37-44 (GVTGSGKT) coordinates ATP. Positions 90-113 (YYDYYQPEAYIPTKDLYIEKDADI) match the Beta-hairpin motif. Residues 428–581 (QVDDFIEEVQ…QLMYNIEHDI (154 aa)) enclose the Helicase C-terminal domain. A UVR domain is found at 626–661 (EEYLALLEEEMWRASSELRYEDAAMLRDEMLRIKRE).

Belongs to the UvrB family. As to quaternary structure, forms a heterotetramer with UvrA during the search for lesions. Interacts with UvrC in an incision complex.

It is found in the cytoplasm. Its function is as follows. The UvrABC repair system catalyzes the recognition and processing of DNA lesions. A damage recognition complex composed of 2 UvrA and 2 UvrB subunits scans DNA for abnormalities. Upon binding of the UvrA(2)B(2) complex to a putative damaged site, the DNA wraps around one UvrB monomer. DNA wrap is dependent on ATP binding by UvrB and probably causes local melting of the DNA helix, facilitating insertion of UvrB beta-hairpin between the DNA strands. Then UvrB probes one DNA strand for the presence of a lesion. If a lesion is found the UvrA subunits dissociate and the UvrB-DNA preincision complex is formed. This complex is subsequently bound by UvrC and the second UvrB is released. If no lesion is found, the DNA wraps around the other UvrB subunit that will check the other stand for damage. This chain is UvrABC system protein B, found in Kosmotoga olearia (strain ATCC BAA-1733 / DSM 21960 / TBF 19.5.1).